A 625-amino-acid polypeptide reads, in one-letter code: FMRFamide-activated amiloride-sensitive sodium channel (625 aa).

The Cytoplasmic segment spans residues methionine 1–lysine 67. Residues valine 68–valine 89 form a helical membrane-spanning segment. The Extracellular segment spans residues arginine 90–glycine 536. 7 N-linked (GlcNAc...) asparagine glycosylation sites follow: asparagine 134, asparagine 196, asparagine 303, asparagine 349, asparagine 365, asparagine 372, and asparagine 473. The chain crosses the membrane as a helical span at residues threonine 537–isoleucine 557. The Cytoplasmic portion of the chain corresponds to arginine 558 to valine 625. Positions leucine 570–serine 591 are disordered. The segment covering threonine 575–serine 591 has biased composition (low complexity).

The protein belongs to the amiloride-sensitive sodium channel (TC 1.A.6) family. Muscle and nervous tissue.

The protein resides in the membrane. Its function is as follows. FMRFamide-gated ionotropic receptor. This chain is FMRFamide-activated amiloride-sensitive sodium channel, found in Cornu aspersum (Brown garden snail).